The primary structure comprises 549 residues: MLNQKLNPTPSEDLTIDVDLFYETDPCELKLDEMIEAEPEPEMIEGLPASDALTPADRYLELFEHVQSTKLFPDSKTFPDCAPKMDPLDILIRYRKVRRHRDFDLRRFVENHFWLPETLSSEYVSNPENSLKEHIDQLWPILTREPQDHIPWSSLLALPQSYIVPGGRFSETYYWDSYFTMLGLAESGREDLLKCMADNFAWMIENYGHIPNGNRTYYLSRSQPPVFALMVELFEEDGVRGARRYLDHLKMEYAFWMDGAESLALNQAYRHVVRMPDGSLLNRYWDDRDTPRDESWLEDVETAKHSGRPPNEVYRDLRAGAASGWDYSSRWLRDAGRLASIRTTQFIPIDLNAFLYKLESAIANISALKGERDTEALFRQKASDRRAAVNHYLWDDENGCYRDYDWRREEMALFSAASIVPLYVGMANHEQADRLANVVRSRLLTPGGIMATEYETGEQWDKPNGWAPLQWMAIQGFKRYGDDMLGDEIAHNWLKTVNHFYQEHHKLIEKYHISGGTPREGGGGEYPLQDGFGWTNGVVRRLIGLYGEP.

Substrate contacts are provided by residues R168, 175-176 (WD), N212, 221-223 (RSQ), 292-294 (RDE), and G324. Residues D326 and E509 each act as proton donor/acceptor in the active site. Residue E525 participates in substrate binding.

It belongs to the glycosyl hydrolase 37 family. Monomer.

The protein resides in the cytoplasm. It carries out the reaction alpha,alpha-trehalose + H2O = alpha-D-glucose + beta-D-glucose. It functions in the pathway glycan degradation; trehalose degradation; D-glucose from alpha,alpha-trehalose: step 1/1. Hydrolyzes trehalose to glucose. Could be involved, in cells returning to low osmolarity conditions, in the utilization of the accumulated cytoplasmic trehalose, which was synthesized in response to high osmolarity. The sequence is that of Cytoplasmic trehalase from Salmonella typhi.